Here is a 280-residue protein sequence, read N- to C-terminus: Pantothenate synthetase (280 aa).

31-38 is an ATP binding site; sequence MGNLHAGH. Histidine 38 serves as the catalytic Proton donor. Glutamine 62 contacts (R)-pantoate. Glutamine 62 contributes to the beta-alanine binding site. 150–153 serves as a coordination point for ATP; that stretch reads GKKD. Glutamine 156 is a (R)-pantoate binding site. Residues valine 179 and 187–190 contribute to the ATP site; that span reads MSSR.

This sequence belongs to the pantothenate synthetase family. As to quaternary structure, homodimer.

The protein resides in the cytoplasm. It catalyses the reaction (R)-pantoate + beta-alanine + ATP = (R)-pantothenate + AMP + diphosphate + H(+). Its pathway is cofactor biosynthesis; (R)-pantothenate biosynthesis; (R)-pantothenate from (R)-pantoate and beta-alanine: step 1/1. Functionally, catalyzes the condensation of pantoate with beta-alanine in an ATP-dependent reaction via a pantoyl-adenylate intermediate. This Xanthomonas euvesicatoria pv. vesicatoria (strain 85-10) (Xanthomonas campestris pv. vesicatoria) protein is Pantothenate synthetase.